A 162-amino-acid chain; its full sequence is MSGLTHFDAAGHAHMVDVGGKQETQRVAVARGTIRMLPATFALIRDGKAKKGDVLGVARIAAIQGAKRTADLIPLCHPLALTRVAVDFELDDALPGVHCVAQVETFGRTGVEMEALTAVQVGLLTVYDMCKAVDRGMVITDVSVREKRGGKSGDWTAEDAAG.

Substrate is bound by residues L75–H77 and M113–E114. The active site involves D128.

This sequence belongs to the MoaC family. As to quaternary structure, homohexamer; trimer of dimers.

The enzyme catalyses (8S)-3',8-cyclo-7,8-dihydroguanosine 5'-triphosphate = cyclic pyranopterin phosphate + diphosphate. Its pathway is cofactor biosynthesis; molybdopterin biosynthesis. In terms of biological role, catalyzes the conversion of (8S)-3',8-cyclo-7,8-dihydroguanosine 5'-triphosphate to cyclic pyranopterin monophosphate (cPMP). This is Cyclic pyranopterin monophosphate synthase from Burkholderia vietnamiensis (strain G4 / LMG 22486) (Burkholderia cepacia (strain R1808)).